The following is a 462-amino-acid chain: Argininosuccinate lyase (462 aa).

Belongs to the lyase 1 family. Argininosuccinate lyase subfamily.

The protein localises to the cytoplasm. The catalysed reaction is 2-(N(omega)-L-arginino)succinate = fumarate + L-arginine. Its pathway is amino-acid biosynthesis; L-arginine biosynthesis; L-arginine from L-ornithine and carbamoyl phosphate: step 3/3. This chain is Argininosuccinate lyase, found in Gloeothece citriformis (strain PCC 7424) (Cyanothece sp. (strain PCC 7424)).